Consider the following 201-residue polypeptide: MAHAEEPEDRTASTEPVVRPGSLLVSSTDLVEPAFRRTVIYVIEHNEAGSLGVVINRPSETAVHDVLPQWAPLTARPSALYVGGPVKRDAALCLATLRTGAQADGVRGLRRVHGRVVMVDLDSDPEVVAPLVEGVRIFAGYSGWTYGQLDSELQRDDWIVISALASDVLAPARVDVWAQVLRRQPLPLALLATHPIDVERN.

The protein belongs to the UPF0301 (AlgH) family.

This is UPF0301 protein ROP_34500 from Rhodococcus opacus (strain B4).